The sequence spans 172 residues: ATP synthase subunit b (172 aa).

A helical membrane pass occupies residues 5–24 (LLMLLLLGSVSLFANEAAAS).

It belongs to the ATPase B chain family. In terms of assembly, F-type ATPases have 2 components, F(1) - the catalytic core - and F(0) - the membrane proton channel. F(1) has five subunits: alpha(3), beta(3), gamma(1), delta(1), epsilon(1). F(0) has three main subunits: a(1), b(2) and c(10-14). The alpha and beta chains form an alternating ring which encloses part of the gamma chain. F(1) is attached to F(0) by a central stalk formed by the gamma and epsilon chains, while a peripheral stalk is formed by the delta and b chains.

It is found in the cell inner membrane. Its function is as follows. F(1)F(0) ATP synthase produces ATP from ADP in the presence of a proton or sodium gradient. F-type ATPases consist of two structural domains, F(1) containing the extramembraneous catalytic core and F(0) containing the membrane proton channel, linked together by a central stalk and a peripheral stalk. During catalysis, ATP synthesis in the catalytic domain of F(1) is coupled via a rotary mechanism of the central stalk subunits to proton translocation. Component of the F(0) channel, it forms part of the peripheral stalk, linking F(1) to F(0). The protein is ATP synthase subunit b of Nitratiruptor sp. (strain SB155-2).